Reading from the N-terminus, the 160-residue chain is Nucleotide-binding protein VFMJ11_1323 (160 aa).

This sequence belongs to the YajQ family.

Functionally, nucleotide-binding protein. The protein is Nucleotide-binding protein VFMJ11_1323 of Aliivibrio fischeri (strain MJ11) (Vibrio fischeri).